A 195-amino-acid polypeptide reads, in one-letter code: 3-isopropylmalate dehydratase small subunit (195 aa).

Belongs to the LeuD family. LeuD type 1 subfamily. As to quaternary structure, heterodimer of LeuC and LeuD.

The catalysed reaction is (2R,3S)-3-isopropylmalate = (2S)-2-isopropylmalate. It participates in amino-acid biosynthesis; L-leucine biosynthesis; L-leucine from 3-methyl-2-oxobutanoate: step 2/4. Catalyzes the isomerization between 2-isopropylmalate and 3-isopropylmalate, via the formation of 2-isopropylmaleate. This chain is 3-isopropylmalate dehydratase small subunit, found in Rubrobacter xylanophilus (strain DSM 9941 / JCM 11954 / NBRC 16129 / PRD-1).